The chain runs to 1400 residues: DNA-directed RNA polymerase subunit beta' (1400 aa).

Positions 70, 72, 85, and 88 each coordinate Zn(2+). 3 residues coordinate Mg(2+): Asp-460, Asp-462, and Asp-464. Zn(2+) is bound by residues Cys-814, Cys-888, Cys-895, and Cys-898.

It belongs to the RNA polymerase beta' chain family. The RNAP catalytic core consists of 2 alpha, 1 beta, 1 beta' and 1 omega subunit. When a sigma factor is associated with the core the holoenzyme is formed, which can initiate transcription. Requires Mg(2+) as cofactor. Zn(2+) serves as cofactor.

The enzyme catalyses RNA(n) + a ribonucleoside 5'-triphosphate = RNA(n+1) + diphosphate. Functionally, DNA-dependent RNA polymerase catalyzes the transcription of DNA into RNA using the four ribonucleoside triphosphates as substrates. The chain is DNA-directed RNA polymerase subunit beta' from Vibrio vulnificus (strain CMCP6).